Here is a 988-residue protein sequence, read N- to C-terminus: Band 4.1-like protein 2 (988 aa).

The interval 1-190 is disordered; it reads MTTEVGSASE…GAAKRETKEV (190 aa). N-acetylthreonine is present on Thr2. Phosphoserine is present on Ser7. A compositionally biased stretch (basic and acidic residues) spans 22–31; the sequence is ASKEKAKEVE. Phosphoserine occurs at positions 38, 86, and 116. Basic and acidic residues-rich tracts occupy residues 110-148 and 160-190; these read ILGK…EAKP and EEVR…TKEV. Residues Ser201, Ser379, Ser395, Ser492, Ser543, Ser555, Ser561, and Ser582 each carry the phosphoserine modification. An FERM domain is found at 211 to 492; it reads VLAKVTLLDG…EHHTFYRLVS (282 aa). A hydrophilic region spans residues 495–651; the sequence is QPPKTKFLTL…TPEPRPSEWE (157 aa). The disordered stretch occupies residues 514–594; sequence TQAQTREAST…KATPLPAEGK (81 aa). The span at 555 to 567 shows a compositional bias: low complexity; it reads SPPGEGSVPGPGV. Phosphotyrosine is present on Tyr606. Ser610 and Ser630 each carry phosphoserine. Disordered stretches follow at residues 639 to 788 and 804 to 839; these read MAST…QAGA and QKLP…VPHL. A spectrin--actin-binding region spans residues 652–837; it reads KRRVTPLPFQ…DPHRVNGEVP (186 aa). The span at 673 to 686 shows a compositional bias: basic and acidic residues; it reads VEEKKRAEVGKDES. Ser698 carries the phosphoserine modification. Residues 704-717 show a composition bias toward basic and acidic residues; the sequence is GETRKVEPVAHKDS. Positions 718–729 are enriched in low complexity; sequence TSLSSESSSSSS. The segment covering 739 to 751 has biased composition (basic and acidic residues); sequence QPHHRVTEGTIRE. A Phosphothreonine modification is found at Thr745. The span at 752–764 shows a compositional bias: acidic residues; sequence EQEECDEELEEEP. Positions 828-839 are enriched in basic and acidic residues; sequence DPHRVNGEVPHL. The tract at residues 838–988 is C-terminal (CTD); sequence HLDLDGLPEI…ETELAEEGEE (151 aa).

Interacts with FCGR1A. Interacts with TRPC4. Interacts (via CTD domain) with FKBP2. Interacts with NUMA1; this interaction is negatively regulated by CDK1 during metaphase and promotes anaphase-specific localization of NUMA1 in symmetrically dividing cells. In terms of tissue distribution, widely expressed.

The protein resides in the cytoplasm. Its subcellular location is the cytoskeleton. It localises to the cell cortex. The protein localises to the cell membrane. Required for dynein-dynactin complex and NUMA1 recruitment at the mitotic cell cortex during anaphase. This Mus musculus (Mouse) protein is Band 4.1-like protein 2.